Here is a 446-residue protein sequence, read N- to C-terminus: Probable E3 ubiquitin-protein ligase XBOS31 (446 aa).

ANK repeat units follow at residues 46-75 (DRFT…DVDV), 79-108 (KKQT…NVLT), 113-142 (RART…QAQG), 160-189 (RGAT…IVSA), and 197-227 (PGST…RLQR). The RING-type zinc finger occupies 317–366 (CNICFEQACSMEVKECGHQMCAACTLAICCHSKPNPKTLLLHPPACPFCR). Residues 376-401 (TTNSNKTNSRRRSRSRSSSFKGGLSS) form a disordered region.

It carries out the reaction S-ubiquitinyl-[E2 ubiquitin-conjugating enzyme]-L-cysteine + [acceptor protein]-L-lysine = [E2 ubiquitin-conjugating enzyme]-L-cysteine + N(6)-ubiquitinyl-[acceptor protein]-L-lysine.. The protein operates within protein modification; protein ubiquitination. This is Probable E3 ubiquitin-protein ligase XBOS31 (XBOS31) from Oryza sativa subsp. japonica (Rice).